The primary structure comprises 278 residues: 4-hydroxy-tetrahydrodipicolinate reductase (278 aa).

Residues 13 to 18 (GAAGKM) and 111 to 113 (GTT) contribute to the NAD(+) site. Histidine 167 (proton donor/acceptor) is an active-site residue. Residue histidine 168 participates in (S)-2,3,4,5-tetrahydrodipicolinate binding. Lysine 171 functions as the Proton donor in the catalytic mechanism. 177–178 (GT) is a (S)-2,3,4,5-tetrahydrodipicolinate binding site.

This sequence belongs to the DapB family.

It localises to the cytoplasm. It catalyses the reaction (S)-2,3,4,5-tetrahydrodipicolinate + NAD(+) + H2O = (2S,4S)-4-hydroxy-2,3,4,5-tetrahydrodipicolinate + NADH + H(+). It carries out the reaction (S)-2,3,4,5-tetrahydrodipicolinate + NADP(+) + H2O = (2S,4S)-4-hydroxy-2,3,4,5-tetrahydrodipicolinate + NADPH + H(+). Its pathway is amino-acid biosynthesis; L-lysine biosynthesis via DAP pathway; (S)-tetrahydrodipicolinate from L-aspartate: step 4/4. In terms of biological role, catalyzes the conversion of 4-hydroxy-tetrahydrodipicolinate (HTPA) to tetrahydrodipicolinate. The protein is 4-hydroxy-tetrahydrodipicolinate reductase of Mastigocladus laminosus (Fischerella sp.).